Here is a 513-residue protein sequence, read N- to C-terminus: Cytochrome P450 4p1 (513 aa).

Heme is bound by residues Glu320 and Cys459.

The protein belongs to the cytochrome P450 family. The cofactor is heme.

It localises to the endoplasmic reticulum membrane. Its subcellular location is the microsome membrane. May be involved in the metabolism of insect hormones and in the breakdown of synthetic insecticides. The protein is Cytochrome P450 4p1 (Cyp4p1) of Drosophila melanogaster (Fruit fly).